The following is a 372-amino-acid chain: MNTGIDLQGSFIESLKQLGLPDGVAKALWIPLPSFLMIIGATVGVLVVVWLERKISAAAQQRIGPEYAGPLGVLQPVADGIKLVFKEDIIPAKADPWLFTLGPVLVVLPVFVSYLIVPFGQNLVITDLNVGIFLWISLSSIAPIGLLMSGYASNNKYSLLGGLRAAAQSISYEIPLAFSVLAIAMMSNSLSTIDIVQQQSGYGILGWNVWRQPVGLIIFWIAALAECERLPFDLPEAEEEIVAGYQTEYSGMKFGLFYVGSYVNLVLSALVFAILYLGGWEFPVPLDKLAGWLGVNDNSPWLQVITASLGITMTVLKAYFLVFIAVLLRWTVPRVRIDQLLNLGWKFLLPVSLVNLLLTAALKLAFPVAFGG.

8 helical membrane passes run 29–49 (WIPLPSFLMIIGATVGVLVVV), 97–117 (WLFTLGPVLVVLPVFVSYLIV), 130–150 (VGIFLWISLSSIAPIGLLMSG), 176–196 (LAFSVLAIAMMSNSLSTIDIV), 204–224 (ILGWNVWRQPVGLIIFWIAAL), 254–274 (FGLFYVGSYVNLVLSALVFAI), 308–328 (SLGITMTVLKAYFLVFIAVLL), and 347–367 (FLLPVSLVNLLLTAALKLAFP).

Belongs to the complex I subunit 1 family. In terms of assembly, NDH-1 is composed of at least 11 different subunits.

The protein resides in the cellular thylakoid membrane. It carries out the reaction a plastoquinone + NADH + (n+1) H(+)(in) = a plastoquinol + NAD(+) + n H(+)(out). The enzyme catalyses a plastoquinone + NADPH + (n+1) H(+)(in) = a plastoquinol + NADP(+) + n H(+)(out). NDH-1 shuttles electrons from an unknown electron donor, via FMN and iron-sulfur (Fe-S) centers, to quinones in the respiratory and/or the photosynthetic chain. The immediate electron acceptor for the enzyme in this species is believed to be plastoquinone. Couples the redox reaction to proton translocation, and thus conserves the redox energy in a proton gradient. The polypeptide is NAD(P)H-quinone oxidoreductase subunit 1 (Rippkaea orientalis (strain PCC 8801 / RF-1) (Cyanothece sp. (strain PCC 8801))).